The chain runs to 462 residues: L-seryl-tRNA(Sec) selenium transferase (462 aa).

N6-(pyridoxal phosphate)lysine is present on Lys292.

This sequence belongs to the SelA family. It depends on pyridoxal 5'-phosphate as a cofactor.

It is found in the cytoplasm. The catalysed reaction is L-seryl-tRNA(Sec) + selenophosphate + H(+) = L-selenocysteinyl-tRNA(Sec) + phosphate. It participates in aminoacyl-tRNA biosynthesis; selenocysteinyl-tRNA(Sec) biosynthesis; selenocysteinyl-tRNA(Sec) from L-seryl-tRNA(Sec) (bacterial route): step 1/1. In terms of biological role, converts seryl-tRNA(Sec) to selenocysteinyl-tRNA(Sec) required for selenoprotein biosynthesis. The polypeptide is L-seryl-tRNA(Sec) selenium transferase (Geotalea daltonii (strain DSM 22248 / JCM 15807 / FRC-32) (Geobacter daltonii)).